We begin with the raw amino-acid sequence, 702 residues long: Polyribonucleotide nucleotidyltransferase (702 aa).

The Mg(2+) site is built by D485 and D491. The KH domain maps to 552-611 (PKTSTLQIDPEKIRDVIGAGGKVINKIIADTGVKIDIKEDGLVYVSSAESEGVKEAVKII). In terms of domain architecture, S1 motif spans 621-689 (GEIYLGKVTK…SQGRINLSRK (69 aa)).

This sequence belongs to the polyribonucleotide nucleotidyltransferase family. Mg(2+) is required as a cofactor.

The protein localises to the cytoplasm. The enzyme catalyses RNA(n+1) + phosphate = RNA(n) + a ribonucleoside 5'-diphosphate. Its function is as follows. Involved in mRNA degradation. Catalyzes the phosphorolysis of single-stranded polyribonucleotides processively in the 3'- to 5'-direction. The polypeptide is Polyribonucleotide nucleotidyltransferase (Clostridium perfringens (strain ATCC 13124 / DSM 756 / JCM 1290 / NCIMB 6125 / NCTC 8237 / Type A)).